Here is a 280-residue protein sequence, read N- to C-terminus: DNA repair protein XRCC2 (280 aa).

The residue at position 10 (Ser10) is a Phosphoserine.

Belongs to the RecA family. RAD51 subfamily. As to quaternary structure, interacts with RAD51D. Part of the BCDX2 complex consisting of RAD51B, RAD51C, RAD51D and XRCC2; the complex has a ring-like structure arranged into a flat disk around a central channel. In the absence of DNA, the BCDX2 subcomplex XRCC2:RAD51D formed a multimeric ring structure; in the presence of single-stranded DNA it formed a filamentous structure with the ssDNA.

It localises to the nucleus. The protein resides in the cytoplasm. It is found in the cytoskeleton. The protein localises to the microtubule organizing center. Its subcellular location is the centrosome. In terms of biological role, involved in the homologous recombination repair (HRR) pathway of double-stranded DNA, thought to repair chromosomal fragmentation, translocations and deletions. Part of the RAD51 paralog protein complex BCDX2 which acts in the BRCA1-BRCA2-dependent HR pathway. Upon DNA damage, BCDX2 acts downstream of BRCA2 recruitment and upstream of RAD51 recruitment. BCDX2 binds predominantly to the intersection of the four duplex arms of the Holliday junction and to junction of replication forks. The BCDX2 complex was originally reported to bind single-stranded DNA, single-stranded gaps in duplex DNA and specifically to nicks in duplex DNA. In Homo sapiens (Human), this protein is DNA repair protein XRCC2 (XRCC2).